The primary structure comprises 143 residues: Ribosomal RNA large subunit methyltransferase H (143 aa).

S-adenosyl-L-methionine-binding positions include G95 and 111-116; that span reads FSDLTF.

This sequence belongs to the RNA methyltransferase RlmH family. As to quaternary structure, homodimer.

The protein localises to the cytoplasm. The enzyme catalyses pseudouridine(1915) in 23S rRNA + S-adenosyl-L-methionine = N(3)-methylpseudouridine(1915) in 23S rRNA + S-adenosyl-L-homocysteine + H(+). Functionally, specifically methylates the pseudouridine at position 1915 (m3Psi1915) in 23S rRNA. This chain is Ribosomal RNA large subunit methyltransferase H, found in Metamycoplasma arthritidis (strain 158L3-1) (Mycoplasma arthritidis).